A 233-amino-acid chain; its full sequence is Purine nucleoside phosphorylase DeoD-type (233 aa).

Residue His-4 coordinates a purine D-ribonucleoside. Residues Gly-20, Arg-24, Arg-43, and 87–90 contribute to the phosphate site; that span reads RVGT. A purine D-ribonucleoside-binding positions include 178–180 and 202–203; these read EME and SD. Asp-203 serves as the catalytic Proton donor.

The protein belongs to the PNP/UDP phosphorylase family. Homohexamer; trimer of homodimers.

The catalysed reaction is a purine D-ribonucleoside + phosphate = a purine nucleobase + alpha-D-ribose 1-phosphate. The enzyme catalyses a purine 2'-deoxy-D-ribonucleoside + phosphate = a purine nucleobase + 2-deoxy-alpha-D-ribose 1-phosphate. Catalyzes the reversible phosphorolytic breakdown of the N-glycosidic bond in the beta-(deoxy)ribonucleoside molecules, with the formation of the corresponding free purine bases and pentose-1-phosphate. This Listeria monocytogenes serotype 4b (strain CLIP80459) protein is Purine nucleoside phosphorylase DeoD-type.